The sequence spans 253 residues: 5'/3'-nucleotidase SurE (253 aa).

Positions 8, 9, 39, and 92 each coordinate a divalent metal cation.

It belongs to the SurE nucleotidase family. A divalent metal cation serves as cofactor.

Its subcellular location is the cytoplasm. The enzyme catalyses a ribonucleoside 5'-phosphate + H2O = a ribonucleoside + phosphate. The catalysed reaction is a ribonucleoside 3'-phosphate + H2O = a ribonucleoside + phosphate. It carries out the reaction [phosphate](n) + H2O = [phosphate](n-1) + phosphate + H(+). Nucleotidase with a broad substrate specificity as it can dephosphorylate various ribo- and deoxyribonucleoside 5'-monophosphates and ribonucleoside 3'-monophosphates with highest affinity to 3'-AMP. Also hydrolyzes polyphosphate (exopolyphosphatase activity) with the preference for short-chain-length substrates (P20-25). Might be involved in the regulation of dNTP and NTP pools, and in the turnover of 3'-mononucleotides produced by numerous intracellular RNases (T1, T2, and F) during the degradation of various RNAs. This chain is 5'/3'-nucleotidase SurE, found in Escherichia coli O17:K52:H18 (strain UMN026 / ExPEC).